The following is a 413-amino-acid chain: Ureide permease 5 (413 aa).

Residues 1–18 lie on the Extracellular side of the membrane; that stretch reads MMIAQELGIYVVESKGGA. The helical transmembrane segment at 19-39 threads the bilayer; the sequence is ILCLLLSLLCLGTWPALMALL. At 40 to 50 the chain is on the cytoplasmic side; sequence ERRGRLPQHTY. The helical transmembrane segment at 51–71 threads the bilayer; it reads LDYSITNFLAAIFIAFVFGGI. The Extracellular portion of the chain corresponds to 72-91; the sequence is GESTHEAPSFITQLTQIQDN. A helical membrane pass occupies residues 92–112; that stretch reads WPSVLFAMAGGVGLSIGNLAT. The Cytoplasmic segment spans residues 113–115; sequence QYS. The chain crosses the membrane as a helical span at residues 116-136; the sequence is LAFVGLSVTEVTAASITVVVG. Over 137 to 149 the chain is Extracellular; sequence TTVNYFLDNGLNR. A helical membrane pass occupies residues 150-170; it reads ADILFSGVGCFMVAVCLGSAV. Residues 171 to 240 are Cytoplasmic-facing; the sequence is HSSNSADIKA…RAIKVLGKSM (70 aa). An ATP-binding site is contributed by 232–239; it reads AIKVLGKS. A helical transmembrane segment spans residues 241-261; sequence VVGLGITFFAGLSFSLFSPLF. The Extracellular segment spans residues 262–278; sequence NLATNDQWHTLKQGVPK. Residues 279–299 traverse the membrane as a helical segment; that stretch reads LIVYTAFFYFSLSCFVIAVAL. At 300 to 326 the chain is on the cytoplasmic side; sequence NISFLYKPVLDSPRSSFREYLSDWNGR. Residues 327 to 347 form a helical membrane-spanning segment; it reads GWALAAGLLCGFGNGLQFMGG. Residues 348 to 352 are Extracellular-facing; sequence QAAGY. A helical membrane pass occupies residues 353–373; that stretch reads AASDAVQALPLVSTFWGIYLF. Residues 374–384 are Cytoplasmic-facing; it reads GEYRRSSTRTY. A helical transmembrane segment spans residues 385–405; that stretch reads ALLVGMLVMFTVAVGLLMASA. The Extracellular portion of the chain corresponds to 406-413; sequence GERETRFT.

This sequence belongs to the plant ureide permease (TC 2.A.7.19) family. In terms of tissue distribution, expressed in lateral roots, rosette leaves, stems, stipules, flower stigma, pedicels and the connective tissue between pollen sacks.

The protein localises to the membrane. Its function is as follows. Proton-coupled transporter that transports a wide spectrum of oxo derivatives of heterocyclic nitrogen compounds, including allantoin, uric acid and xanthine, but not adenine. Mediates transport of uracil and 5-fluorouracil (a toxic uracil analog). In terms of biological role, proton-coupled transporter that transports a wide spectrum of oxo derivatives of heterocyclic nitrogen compounds, including allantoin, xanthine and uracil. The polypeptide is Ureide permease 5 (Arabidopsis thaliana (Mouse-ear cress)).